A 418-amino-acid chain; its full sequence is ORC1-type DNA replication protein 2 (418 aa).

Residues 72 to 76 (TGKTV), tyrosine 218, and arginine 230 each bind ATP.

The protein belongs to the CDC6/cdc18 family.

Its function is as follows. Involved in regulation of DNA replication. This Sulfurisphaera tokodaii (strain DSM 16993 / JCM 10545 / NBRC 100140 / 7) (Sulfolobus tokodaii) protein is ORC1-type DNA replication protein 2 (cdc6-2).